A 265-amino-acid polypeptide reads, in one-letter code: Seminal vesicle secretory protein 3A (265 aa).

The signal sequence occupies residues 1–20 (MKSIFFSLSLLLLLEKKAAG). Tandem repeats lie at residues 116-119 (QIKS), 122-125 (QVKS), 129-132 (QLKS), 136-139 (QLKT), and 142-145 (QVKS). A 5 X 4 AA tandem repeats of Q-X-K-[ST] region spans residues 116–145 (QIKSQTQVKSYAAQLKSQPGQLKTIGQVKS).

In terms of processing, glycosylated. Covalently cross-linked by transglutaminase, which is important for the formation of the gelatinous copulatory plug. Five repeats of Q-X-K-(S/T) in the central region of the protein serve as the transglutaminase substrate site(s). Highly expressed in the seminal vesicle where it is detected in luminal epithelium of the mucosa folds, and also in luminal fluid (at protein level). Not detected in other tissues tested.

Its subcellular location is the secreted. Component of the copulatory plug. In Mus musculus (Mouse), this protein is Seminal vesicle secretory protein 3A.